The chain runs to 180 residues: Bifunctional protein PyrR (180 aa).

Residues 101 to 113 (VVLVDDVIFKGRT) carry the PRPP-binding motif.

The protein belongs to the purine/pyrimidine phosphoribosyltransferase family. PyrR subfamily.

It catalyses the reaction UMP + diphosphate = 5-phospho-alpha-D-ribose 1-diphosphate + uracil. In terms of biological role, regulates the transcription of the pyrimidine nucleotide (pyr) operon in response to exogenous pyrimidines. Functionally, also displays a weak uracil phosphoribosyltransferase activity which is not physiologically significant. The protein is Bifunctional protein PyrR of Trichormus variabilis (strain ATCC 29413 / PCC 7937) (Anabaena variabilis).